Reading from the N-terminus, the 932-residue chain is MKIKDTLNLGKTAFPMRAGLPNKEPNWQKDWADATLYEKRQELNEGKPSFMLHDGPPYANGNIHLGHSLNKISKDIIVRYKSMAGFRAPYVPGWDTHGLPIEQQLAKAGMKRKEMDLLDYLEECRKYAMKQVDMQRSDFKSLGVLADWDRPYLTLLPEYEAAQIRVFGKMAEKGYIYKGQKPIYWSPSSESSLAEAEIEYQDVRSASIFVAFKAKDTKGKLPEDVEFVIWTTTPWTIPSNLGIFAHPDYDYSVVAVNGRKFVIASEMLEAVAEKLEWENPEVLQTIKGSELEYMVAKHPFYDRETLIMNADYVTLDSGTGLVHVAPGHGEDDYFASRKYKLPVLSPIDNRGYYTDEAPGLEGLLYDEGNKVVSKWLEEKDALLKLEFFTHSYPHDWRTKKPVIFRATPQWFASIDDFRQNILDEVERVDWVIPWGKTRLFNMVRDRGDWVISRQRAWGVPLPIFYGENGEPIITPETTEHVAKLFAEFGSKVWFEREAKDLLPEGFTHPASPNGEFTKEKDIMDVWFDSGSSWNGVLNERDYLSFPADLYLEGSDQYRGWFNSSITTSVAVNGVAPYKAVLSQGFVLDGKGRKMSKSIGNTIVPKDVTKKFGADILRLWVASIDTESDVRVSMDILSQVSEVYRKIRNTLRFLIANTSDFNPKEDAIDFAELRPVDKYMLVKFNELVKQIRTAYDNYSFMTVYKSIINFITNDLSSFYLDFAKDVVYIEAANSPERRSMQTVMYVILKDLVKILVPILPHTAEETWTYLEHEPENFAYLAEMPEAAEIPGSEELLGNWQEFLDFRDKILKALESAREAKLIGKSLEATVTIYPNEVVRTLLTAIDENVAQLLIVSNFVVANEPVNNAPESAMKFDDLAVLVEHAAGEVCDRCRRTDETVGHNANEHLKMLCEHCAHIVETEFPEILEEGFED.

Residues 57-67 (PYANGNIHLGH) carry the 'HIGH' region motif. An L-isoleucyl-5'-AMP-binding site is contributed by Glu552. The short motif at 593 to 597 (KMSKS) is the 'KMSKS' region element. Lys596 is a binding site for ATP. Zn(2+) contacts are provided by Cys889, Cys892, Cys911, and Cys914.

The protein belongs to the class-I aminoacyl-tRNA synthetase family. IleS type 1 subfamily. As to quaternary structure, monomer. Zn(2+) is required as a cofactor.

It is found in the cytoplasm. It catalyses the reaction tRNA(Ile) + L-isoleucine + ATP = L-isoleucyl-tRNA(Ile) + AMP + diphosphate. Functionally, catalyzes the attachment of isoleucine to tRNA(Ile). As IleRS can inadvertently accommodate and process structurally similar amino acids such as valine, to avoid such errors it has two additional distinct tRNA(Ile)-dependent editing activities. One activity is designated as 'pretransfer' editing and involves the hydrolysis of activated Val-AMP. The other activity is designated 'posttransfer' editing and involves deacylation of mischarged Val-tRNA(Ile). The protein is Isoleucine--tRNA ligase of Lactococcus lactis subsp. lactis (strain IL1403) (Streptococcus lactis).